A 202-amino-acid chain; its full sequence is Methylthioribulose-1-phosphate dehydratase (202 aa).

Residues His93 and His95 each contribute to the Zn(2+) site.

It belongs to the aldolase class II family. MtnB subfamily. Requires Zn(2+) as cofactor.

The enzyme catalyses 5-(methylsulfanyl)-D-ribulose 1-phosphate = 5-methylsulfanyl-2,3-dioxopentyl phosphate + H2O. It functions in the pathway amino-acid biosynthesis; L-methionine biosynthesis via salvage pathway; L-methionine from S-methyl-5-thio-alpha-D-ribose 1-phosphate: step 2/6. Functionally, catalyzes the dehydration of methylthioribulose-1-phosphate (MTRu-1-P) into 2,3-diketo-5-methylthiopentyl-1-phosphate (DK-MTP-1-P). This is Methylthioribulose-1-phosphate dehydratase from Klebsiella pneumoniae subsp. pneumoniae (strain ATCC 700721 / MGH 78578).